A 481-amino-acid polypeptide reads, in one-letter code: UDP-N-acetylmuramoylalanine--D-glutamate ligase (481 aa).

ATP is bound at residue 108–114; sequence GTNGKTS.

The protein belongs to the MurCDEF family.

It localises to the cytoplasm. It catalyses the reaction UDP-N-acetyl-alpha-D-muramoyl-L-alanine + D-glutamate + ATP = UDP-N-acetyl-alpha-D-muramoyl-L-alanyl-D-glutamate + ADP + phosphate + H(+). It participates in cell wall biogenesis; peptidoglycan biosynthesis. Cell wall formation. Catalyzes the addition of glutamate to the nucleotide precursor UDP-N-acetylmuramoyl-L-alanine (UMA). The polypeptide is UDP-N-acetylmuramoylalanine--D-glutamate ligase (Bifidobacterium longum (strain DJO10A)).